Here is a 459-residue protein sequence, read N- to C-terminus: Argininosuccinate lyase (459 aa).

This sequence belongs to the lyase 1 family. Argininosuccinate lyase subfamily.

The protein resides in the cytoplasm. It catalyses the reaction 2-(N(omega)-L-arginino)succinate = fumarate + L-arginine. It participates in amino-acid biosynthesis; L-arginine biosynthesis; L-arginine from L-ornithine and carbamoyl phosphate: step 3/3. This is Argininosuccinate lyase from Prochlorococcus marinus (strain MIT 9301).